Reading from the N-terminus, the 470-residue chain is Uronate isomerase (470 aa).

It belongs to the metallo-dependent hydrolases superfamily. Uronate isomerase family.

It catalyses the reaction D-glucuronate = D-fructuronate. The enzyme catalyses aldehydo-D-galacturonate = keto-D-tagaturonate. The protein operates within carbohydrate metabolism; pentose and glucuronate interconversion. This Escherichia coli O8 (strain IAI1) protein is Uronate isomerase.